Reading from the N-terminus, the 305-residue chain is Oxidoreductase OpS7 (305 aa).

This sequence belongs to the oxidoreductase OpS7 family.

Its pathway is secondary metabolite biosynthesis. Oxidoreductase; part of the gene cluster that mediates the biosynthesis of the bibenzoquinone oosporein, a metabolite required for fungal virulence that acts by evading host immunity to facilitate fungal multiplication in insects. The non-reducing polyketide synthase OpS1 produces orsellinic acid by condensing acetyl-CoA with 3 malonyl-CoA units. Orsellinic acid is then hydroxylated to benzenetriol by the hydroxylase OpS4. The intermediate is oxidized either nonenzymatically to 5,5'-dideoxy-oosporein or enzymatically to benzenetetrol by the oxidoreductase OpS7. The latter is further dimerized to oosporein by the catalase OpS5. OpS6 probably functions en route for protecting cells against oxidative stress by scavenging any leaked free radical form of benzenetetrol by activating the thiol group of glutathione. The sequence is that of Oxidoreductase OpS7 from Beauveria bassiana (strain ARSEF 2860) (White muscardine disease fungus).